The sequence spans 377 residues: DNA-directed RNA polymerase subunit alpha (377 aa).

Positions 1 to 259 are alpha N-terminal domain (alpha-NTD); sequence MSDSSHNLLY…KHFSVFEKMD (259 aa). Positions 276–377 are alpha C-terminal domain (alpha-CTD); sequence KDDILHKLVL…KIRSSKNTKG (102 aa).

This sequence belongs to the RNA polymerase alpha chain family. In terms of assembly, homodimer. The RNAP catalytic core consists of 2 alpha, 1 beta, 1 beta' and 1 omega subunit. When a sigma factor is associated with the core the holoenzyme is formed, which can initiate transcription.

The enzyme catalyses RNA(n) + a ribonucleoside 5'-triphosphate = RNA(n+1) + diphosphate. DNA-dependent RNA polymerase catalyzes the transcription of DNA into RNA using the four ribonucleoside triphosphates as substrates. In Chlamydia trachomatis serovar D (strain ATCC VR-885 / DSM 19411 / UW-3/Cx), this protein is DNA-directed RNA polymerase subunit alpha.